The following is a 330-amino-acid chain: Aspartate--ammonia ligase (330 aa).

Belongs to the class-II aminoacyl-tRNA synthetase family. AsnA subfamily.

It is found in the cytoplasm. The enzyme catalyses L-aspartate + NH4(+) + ATP = L-asparagine + AMP + diphosphate + H(+). The protein operates within amino-acid biosynthesis; L-asparagine biosynthesis; L-asparagine from L-aspartate (ammonia route): step 1/1. The polypeptide is Aspartate--ammonia ligase (Escherichia coli O17:K52:H18 (strain UMN026 / ExPEC)).